We begin with the raw amino-acid sequence, 483 residues long: Leukocyte immunoglobulin-like receptor subfamily A member 2 (483 aa).

A signal peptide spans 1-23 (MTPILTVLICLGLSLGPRTHVQA). Residues 24–449 (GHLPKPTLWA…QHPQDYTVEN (426 aa)) are Extracellular-facing. Ig-like C2-type domains follow at residues 27 to 113 (PKPT…DPLE), 117 to 222 (TGAY…GVSK), 224 to 313 (PSLS…DPLD), and 324 to 413 (PSLS…SDPL). Cysteine 49 and cysteine 97 form a disulfide bridge. N-linked (GlcNAc...) asparagine glycosylation is found at asparagine 64, asparagine 103, and asparagine 138. Disulfide bonds link cysteine 143-cysteine 195 and cysteine 244-cysteine 295. Residues asparagine 279, asparagine 300, and asparagine 339 are each glycosylated (N-linked (GlcNAc...) asparagine). An intrachain disulfide couples cysteine 344 to cysteine 395. At tyrosine 404 the chain carries 3'-nitrotyrosine. N-linked (GlcNAc...) asparagine glycosylation occurs at asparagine 429. The chain crosses the membrane as a helical span at residues 450-470 (LIRMGVAGLVLVVLGILLFEA). At 471–483 (QHSQRSLQDAAGR) the chain is on the cytoplasmic side.

In terms of assembly, homodimer. Detected on the surface of all peripheral blood monocytes, neutrophils, basophils and eosinophils (at protein level). Expression levels are very low or not detectable on monocytes, T-cells, B-cells, dendritic cells and natural killer (NK) cells.

The protein localises to the cell membrane. The protein resides in the secreted. In terms of biological role, part of the innate immune responses against microbial infection. Specifically recognizes a set of N-terminally truncated immunoglobulins that are produced via cleavage by proteases from a range of pathogenic bacteria and fungi, including L.pneumophila, M.hyorhinis, S.pneumoniae, S.aureus and C.albicans. Recognizes epitopes that are in part in the variable region of the immunoglobulin light chains, but requires also the constant region for signaling. Binds to a subset of cleaved IgM, IgG3 and IgG4 molecules, but does not bind cleaved IgA1. Binding of N-terminally truncated immunoglobulins mediates activation of neutrophils. In monocytes, activation leads to the release of CSF2, CF3, IL6, CXCL8 and CCL3 and down-regulates responses to bacterial lipopolysaccharide (LPS), possibly via down-regulation of TLR4 expression and reduced signaling via TLR4. In eosinophils, activation by ligand binding leads to the release of RNASE2, IL4 and leukotriene C4. Does not bind class I MHC antigens. The polypeptide is Leukocyte immunoglobulin-like receptor subfamily A member 2 (LILRA2) (Homo sapiens (Human)).